A 91-amino-acid chain; its full sequence is MQVVRIFTDMSISPSLSPRQCPDRYAFRAGRNLPDKEFRYLRTVLVTAAVHRGFGRRLPCHQVTNFLDLPALGRRQPPYMVLRLCGDLCFW.

The protein resides in the plastid. It is found in the chloroplast. This is an uncharacterized protein from Phalaenopsis aphrodite subsp. formosana (Moth orchid).